The chain runs to 354 residues: Methionine import ATP-binding protein MetN (354 aa).

The region spanning 8 to 250 (LDHIDITFRQ…PKEALTQEFI (243 aa)) is the ABC transporter domain. 42–49 (GYSGAGKS) contributes to the ATP binding site.

This sequence belongs to the ABC transporter superfamily. Methionine importer (TC 3.A.1.24) family. In terms of assembly, the complex is composed of two ATP-binding proteins (MetN), two transmembrane proteins (MetI) and a solute-binding protein (MetQ).

Its subcellular location is the cell membrane. It catalyses the reaction L-methionine(out) + ATP + H2O = L-methionine(in) + ADP + phosphate + H(+). The enzyme catalyses D-methionine(out) + ATP + H2O = D-methionine(in) + ADP + phosphate + H(+). Functionally, part of the ABC transporter complex MetNIQ involved in methionine import. Responsible for energy coupling to the transport system. The protein is Methionine import ATP-binding protein MetN of Streptococcus pyogenes serotype M3 (strain ATCC BAA-595 / MGAS315).